A 461-amino-acid polypeptide reads, in one-letter code: Kynurenine 3-monooxygenase (461 aa).

FAD-binding positions include 17-18 (LA), 37-39 (ERR), and Ala56. Residues Arg84 and Tyr98 each contribute to the L-kynurenine site. FAD is bound by residues Arg111, Leu135, Asp311, and 324 to 325 (MN). L-kynurenine-binding residues include Asn369 and Tyr404.

Belongs to the aromatic-ring hydroxylase family. KMO subfamily. The cofactor is FAD.

The enzyme catalyses L-kynurenine + NADPH + O2 + H(+) = 3-hydroxy-L-kynurenine + NADP(+) + H2O. It participates in cofactor biosynthesis; NAD(+) biosynthesis; quinolinate from L-kynurenine: step 1/3. Its pathway is siderophore biosynthesis; quinolobactin biosynthesis. Its function is as follows. Catalyzes the hydroxylation of L-kynurenine (L-Kyn) to form 3-hydroxy-L-kynurenine (L-3OHKyn). Probably required for the synthesis of quinolinic acid and the siderophore quinolobactin. The polypeptide is Kynurenine 3-monooxygenase (Pseudomonas fluorescens).